A 350-amino-acid polypeptide reads, in one-letter code: Probable lactoylglutathione lyase, chloroplastic (350 aa).

A chloroplast-targeting transit peptide spans 1–61 (MVRIIPMAAS…KLLRRSVNCL (61 aa)). 2 consecutive VOC domains span residues 88–212 (RMLH…LLER) and 218–342 (PLCQ…FVDN). H91 serves as a coordination point for Zn(2+). Residue R95 participates in substrate binding. E142 lines the Zn(2+) pocket. The substrate site is built by N146 and H160. The Zn(2+) site is built by H160 and E208. E208 functions as the Proton donor/acceptor in the catalytic mechanism.

Belongs to the glyoxalase I family. Zn(2+) is required as a cofactor.

The protein localises to the plastid. It localises to the chloroplast stroma. It carries out the reaction (R)-S-lactoylglutathione = methylglyoxal + glutathione. It functions in the pathway secondary metabolite metabolism; methylglyoxal degradation; (R)-lactate from methylglyoxal: step 1/2. Catalyzes the conversion of hemimercaptal, formed from methylglyoxal and glutathione, to S-lactoylglutathione. The polypeptide is Probable lactoylglutathione lyase, chloroplastic (Arabidopsis thaliana (Mouse-ear cress)).